The chain runs to 219 residues: MFDANCLKLMFVAGSQDFYHIKGGKNDRINALLDTLELALQSQITAFQFRQKGDLALQDPVEIKQLALKCQKLCQKYGTPFIINDEVRLALELKADGVHVGQEDMAIEEVIALCKKHQFIGLSVNTLEQALKARHLDAVAYFGVGPIFPTPSKKDKQVVGVELLKKIRDSGVKKPLIAIGGITTHNASKLREYGGIAVISAITQARDKALAIEKLLNNA.

4-amino-2-methyl-5-(diphosphooxymethyl)pyrimidine is bound by residues 48–52 and Asn-84; that span reads QFRQK. 2 residues coordinate Mg(2+): Asp-85 and Asp-104. Position 123 (Ser-123) interacts with 4-amino-2-methyl-5-(diphosphooxymethyl)pyrimidine. A 2-[(2R,5Z)-2-carboxy-4-methylthiazol-5(2H)-ylidene]ethyl phosphate-binding site is contributed by 150-152; it reads TPS. Lys-153 serves as a coordination point for 4-amino-2-methyl-5-(diphosphooxymethyl)pyrimidine. 2-[(2R,5Z)-2-carboxy-4-methylthiazol-5(2H)-ylidene]ethyl phosphate-binding positions include Gly-181 and 199-200; that span reads IS.

This sequence belongs to the thiamine-phosphate synthase family. Requires Mg(2+) as cofactor.

The enzyme catalyses 2-[(2R,5Z)-2-carboxy-4-methylthiazol-5(2H)-ylidene]ethyl phosphate + 4-amino-2-methyl-5-(diphosphooxymethyl)pyrimidine + 2 H(+) = thiamine phosphate + CO2 + diphosphate. The catalysed reaction is 2-(2-carboxy-4-methylthiazol-5-yl)ethyl phosphate + 4-amino-2-methyl-5-(diphosphooxymethyl)pyrimidine + 2 H(+) = thiamine phosphate + CO2 + diphosphate. It carries out the reaction 4-methyl-5-(2-phosphooxyethyl)-thiazole + 4-amino-2-methyl-5-(diphosphooxymethyl)pyrimidine + H(+) = thiamine phosphate + diphosphate. Its pathway is cofactor biosynthesis; thiamine diphosphate biosynthesis; thiamine phosphate from 4-amino-2-methyl-5-diphosphomethylpyrimidine and 4-methyl-5-(2-phosphoethyl)-thiazole: step 1/1. Its function is as follows. Condenses 4-methyl-5-(beta-hydroxyethyl)thiazole monophosphate (THZ-P) and 2-methyl-4-amino-5-hydroxymethyl pyrimidine pyrophosphate (HMP-PP) to form thiamine monophosphate (TMP). This Helicobacter pylori (strain HPAG1) protein is Thiamine-phosphate synthase.